Reading from the N-terminus, the 201-residue chain is ATP-dependent Clp protease proteolytic subunit (201 aa).

Serine 100 serves as the catalytic Nucleophile. The active site involves histidine 125.

Belongs to the peptidase S14 family. In terms of assembly, component of the chloroplastic Clp protease core complex.

Its subcellular location is the plastid. It localises to the chloroplast stroma. It catalyses the reaction Hydrolysis of proteins to small peptides in the presence of ATP and magnesium. alpha-casein is the usual test substrate. In the absence of ATP, only oligopeptides shorter than five residues are hydrolyzed (such as succinyl-Leu-Tyr-|-NHMec, and Leu-Tyr-Leu-|-Tyr-Trp, in which cleavage of the -Tyr-|-Leu- and -Tyr-|-Trp bonds also occurs).. Its function is as follows. Cleaves peptides in various proteins in a process that requires ATP hydrolysis. Has a chymotrypsin-like activity. Plays a major role in the degradation of misfolded proteins. The chain is ATP-dependent Clp protease proteolytic subunit from Ranunculus macranthus (Large buttercup).